A 97-amino-acid polypeptide reads, in one-letter code: Class II hydrophobin A (97 aa).

An N-terminal signal peptide occupies residues 1–15 (MKSVVFASLIASALA). 3 disulfides stabilise this stretch: cysteine 30–cysteine 79, cysteine 40–cysteine 53, and cysteine 80–cysteine 91.

The protein belongs to the cerato-ulmin hydrophobin family.

It localises to the secreted. It is found in the cell wall. The protein localises to the vacuole. Its subcellular location is the cytoplasmic vesicle. Its function is as follows. Aerial growth, conidiation, and dispersal of filamentous fungi in the environment rely upon a capability of their secreting small amphipathic proteins called hydrophobins (HPBs) with low sequence identity. Class I can self-assemble into an outermost layer of rodlet bundles on aerial cell surfaces, conferring cellular hydrophobicity that supports fungal growth, development and dispersal; whereas Class II form highly ordered films at water-air interfaces through intermolecular interactions but contribute nothing to the rodlet structure. Hyd2A contributes to certain cell wall-related features, such as hydrophobicity but is not involved in cell wall-related events during fungal proliferation in host hemocoel. Does not contribute to conidial hydrophobicity. Involved in insect hemocoel colonization independent of cell hydrophobicity, as well as in the asexual development. The chain is Class II hydrophobin A from Beauveria bassiana (strain ARSEF 2860) (White muscardine disease fungus).